A 118-amino-acid polypeptide reads, in one-letter code: Large ribosomal subunit protein bL19 (118 aa).

This sequence belongs to the bacterial ribosomal protein bL19 family.

Its function is as follows. This protein is located at the 30S-50S ribosomal subunit interface and may play a role in the structure and function of the aminoacyl-tRNA binding site. The sequence is that of Large ribosomal subunit protein bL19 from Herpetosiphon aurantiacus (strain ATCC 23779 / DSM 785 / 114-95).